The primary structure comprises 168 residues: Peptidoglycan-associated lipoprotein (168 aa).

The signal sequence occupies residues 1 to 24 (MGRIAALTRNPVMIALVAMLAIAG). Cys-25 is lipidated: N-palmitoyl cysteine. Cys-25 is lipidated: S-diacylglycerol cysteine. The 118-residue stretch at 50-167 (AQDFTVNIGD…RAVTTLSGAG (118 aa)) folds into the OmpA-like domain.

The protein belongs to the Pal lipoprotein family. In terms of assembly, the Tol-Pal system is composed of five core proteins: the inner membrane proteins TolA, TolQ and TolR, the periplasmic protein TolB and the outer membrane protein Pal. They form a network linking the inner and outer membranes and the peptidoglycan layer.

It is found in the cell outer membrane. In terms of biological role, part of the Tol-Pal system, which plays a role in outer membrane invagination during cell division and is important for maintaining outer membrane integrity. The chain is Peptidoglycan-associated lipoprotein from Mesorhizobium japonicum (strain LMG 29417 / CECT 9101 / MAFF 303099) (Mesorhizobium loti (strain MAFF 303099)).